The primary structure comprises 274 residues: Diaminopimelate epimerase (274 aa).

Substrate-binding residues include asparagine 11, glutamine 44, and asparagine 64. Cysteine 73 (proton donor) is an active-site residue. Residues 74–75, asparagine 157, asparagine 190, and 208–209 each bind substrate; these read GN and ER. Cysteine 217 (proton acceptor) is an active-site residue. 218–219 lines the substrate pocket; that stretch reads GS.

It belongs to the diaminopimelate epimerase family. Homodimer.

The protein localises to the cytoplasm. It catalyses the reaction (2S,6S)-2,6-diaminopimelate = meso-2,6-diaminopimelate. The protein operates within amino-acid biosynthesis; L-lysine biosynthesis via DAP pathway; DL-2,6-diaminopimelate from LL-2,6-diaminopimelate: step 1/1. Its function is as follows. Catalyzes the stereoinversion of LL-2,6-diaminopimelate (L,L-DAP) to meso-diaminopimelate (meso-DAP), a precursor of L-lysine and an essential component of the bacterial peptidoglycan. The chain is Diaminopimelate epimerase from Erwinia tasmaniensis (strain DSM 17950 / CFBP 7177 / CIP 109463 / NCPPB 4357 / Et1/99).